We begin with the raw amino-acid sequence, 119 residues long: 5-hydroxyisourate hydrolase (119 aa).

Substrate contacts are provided by His10, Arg48, and Tyr116.

The protein belongs to the transthyretin family. 5-hydroxyisourate hydrolase subfamily. Homotetramer.

It catalyses the reaction 5-hydroxyisourate + H2O = 5-hydroxy-2-oxo-4-ureido-2,5-dihydro-1H-imidazole-5-carboxylate + H(+). Its pathway is purine metabolism; urate degradation; (S)-allantoin from urate: step 2/3. Its function is as follows. Catalyzes the hydrolysis of 5-hydroxyisourate (HIU) to 2-oxo-4-hydroxy-4-carboxy-5-ureidoimidazoline (OHCU). This chain is 5-hydroxyisourate hydrolase, found in Deinococcus radiodurans (strain ATCC 13939 / DSM 20539 / JCM 16871 / CCUG 27074 / LMG 4051 / NBRC 15346 / NCIMB 9279 / VKM B-1422 / R1).